A 307-amino-acid chain; its full sequence is Glycerol-3-phosphate dehydrogenase [NAD(P)+] (307 aa).

4 residues coordinate NADPH: Trp14, Arg34, Arg35, and Lys82. Sn-glycerol 3-phosphate contacts are provided by Lys82 and Gly110. Ser114 is a binding site for NADPH. Sn-glycerol 3-phosphate-binding residues include Lys165, Asp218, Ser228, Arg229, and Asn230. Catalysis depends on Lys165, which acts as the Proton acceptor. Arg229 contacts NADPH. Residue Glu255 coordinates NADPH.

It belongs to the NAD-dependent glycerol-3-phosphate dehydrogenase family.

It is found in the cytoplasm. It carries out the reaction sn-glycerol 3-phosphate + NAD(+) = dihydroxyacetone phosphate + NADH + H(+). It catalyses the reaction sn-glycerol 3-phosphate + NADP(+) = dihydroxyacetone phosphate + NADPH + H(+). Its pathway is membrane lipid metabolism; glycerophospholipid metabolism. Its function is as follows. Catalyzes the reduction of the glycolytic intermediate dihydroxyacetone phosphate (DHAP) to sn-glycerol 3-phosphate (G3P), the key precursor for phospholipid synthesis. This Nostoc sp. (strain PCC 7120 / SAG 25.82 / UTEX 2576) protein is Glycerol-3-phosphate dehydrogenase [NAD(P)+].